The sequence spans 272 residues: 3-methyl-2-oxobutanoate hydroxymethyltransferase (272 aa).

Residues Asp-42 and Asp-86 each contribute to the Mg(2+) site. 3-methyl-2-oxobutanoate is bound by residues 42 to 43 (DS), Asp-86, and Lys-116. Residue Glu-118 participates in Mg(2+) binding. The active-site Proton acceptor is Glu-185.

Belongs to the PanB family. In terms of assembly, homodecamer; pentamer of dimers. Requires Mg(2+) as cofactor.

It is found in the cytoplasm. The catalysed reaction is 3-methyl-2-oxobutanoate + (6R)-5,10-methylene-5,6,7,8-tetrahydrofolate + H2O = 2-dehydropantoate + (6S)-5,6,7,8-tetrahydrofolate. It participates in cofactor biosynthesis; (R)-pantothenate biosynthesis; (R)-pantoate from 3-methyl-2-oxobutanoate: step 1/2. Catalyzes the reversible reaction in which hydroxymethyl group from 5,10-methylenetetrahydrofolate is transferred onto alpha-ketoisovalerate to form ketopantoate. This chain is 3-methyl-2-oxobutanoate hydroxymethyltransferase, found in Prochlorococcus marinus (strain MIT 9313).